Consider the following 473-residue polypeptide: Flavonol 3-O-glucosyltransferase UGT89B1 (473 aa).

The active-site Proton acceptor is H25. An an anthocyanidin-binding site is contributed by H25. The active-site Charge relay is the D127. UDP-alpha-D-glucose is bound by residues A348, Q350, H365, W368, N369, S370, and E373. A388 is a binding site for an anthocyanidin. UDP-alpha-D-glucose contacts are provided by D389 and Q390.

It belongs to the UDP-glycosyltransferase family.

The enzyme catalyses a flavonol + UDP-alpha-D-glucose = a flavonol 3-O-beta-D-glucoside + UDP + H(+). The catalysed reaction is a 7-O-hydroxy-flavonol + UDP-alpha-D-glucose = a flavonol 7-O-beta-D-glucoside + UDP + H(+). In terms of biological role, possesses quercetin 3-O-glucosyltransferase, 7-O-glucosyltransferase and 4'-O-glucosyltransferase activities in vitro. Also active in vitro on benzoates and benzoate derivatives. In Arabidopsis thaliana (Mouse-ear cress), this protein is Flavonol 3-O-glucosyltransferase UGT89B1.